A 219-amino-acid polypeptide reads, in one-letter code: PRELI domain-containing protein 1, mitochondrial (219 aa).

The PRELI/MSF1 domain maps to 36–174 (TEDIVHREVT…ILAKLQGEAP (139 aa)).

As to quaternary structure, forms a complex with TRIAP1 in the mitochondrion intermembrane space. Interacts with OPA1 and AIFM1. As to expression, highly expressed in fetal liver; less expressed in fetal brain, lung, and kidney. At the adult stage, expression is drastically reduced in the liver but highly expressed in the spleen, brain, lung, lymph nodes and peripheral blood leukocytes.

Its subcellular location is the mitochondrion. The protein resides in the mitochondrion intermembrane space. It carries out the reaction a 1,2-diacyl-sn-glycero-3-phosphate(in) = a 1,2-diacyl-sn-glycero-3-phosphate(out). In terms of biological role, involved in the modulation of the mitochondrial apoptotic pathway by ensuring the accumulation of cardiolipin (CL) in mitochondrial membranes. In vitro, the TRIAP1:PRELID1 complex mediates the transfer of phosphatidic acid (PA) between liposomes and probably functions as a PA transporter across the mitochondrion intermembrane space to provide PA for CL synthesis in the inner membrane. Regulates the mitochondrial apoptotic pathway in primary Th cells. Regulates Th cell differentiation by down-regulating STAT6 thereby reducing IL-4-induced Th2 cell number. May be important for the development of vital and immunocompetent organs. In Homo sapiens (Human), this protein is PRELI domain-containing protein 1, mitochondrial (PRELID1).